The following is a 455-amino-acid chain: Argininosuccinate lyase (455 aa).

This sequence belongs to the lyase 1 family. Argininosuccinate lyase subfamily.

The protein resides in the cytoplasm. The catalysed reaction is 2-(N(omega)-L-arginino)succinate = fumarate + L-arginine. It participates in amino-acid biosynthesis; L-arginine biosynthesis; L-arginine from L-ornithine and carbamoyl phosphate: step 3/3. In Shewanella baltica (strain OS195), this protein is Argininosuccinate lyase.